A 387-amino-acid polypeptide reads, in one-letter code: Patatin group D-2 (387 aa).

Residues 1–23 (MATTKSFLILIVMILATTSSTFA) form the signal peptide. The 199-residue stretch at 32-230 (LSIDGGGIKG…TVADPALLSI (199 aa)) folds into the PNPLA domain. Residues 36 to 41 (GGGIKG) carry the GXGXXG motif. The short motif at 75–79 (GTSTG) is the GXSXG element. The active-site Nucleophile is Ser-77. A glycan (N-linked (GlcNAc...) asparagine) is linked at Asn-115. The Proton acceptor role is filled by Asp-216. The short motif at 216–218 (DGA) is the DGA/G element. Residues 361-385 (ETYEEALKRFAKLLSDRKKLRANKA) adopt a coiled-coil conformation.

This sequence belongs to the patatin family. In terms of tissue distribution, tuber.

The protein localises to the vacuole. Probable lipolytic acyl hydrolase (LAH), an activity which is thought to be involved in the response of tubers to pathogens. The chain is Patatin group D-2 from Solanum tuberosum (Potato).